A 360-amino-acid chain; its full sequence is MSLTRLNIEAFRNIQSAQLIPAPGINLIYGQNGSGKTSILEAIYFLGMGRSFRSHLSQRVINNDDDKLTLFATLNLARGDSKIGLRRFRSGETEVRIDGEKVKRLSTLAETLPIQVITPESFSLLFEGPKSRRQFIDWGAFHADPLFYGAWTNVRRVLKQRNQLLRNGSSYSNIQFWDQEFVRYAEQVTEIRNHYVDSLNELLKGIIGEFLPSVDVKVSFTRGWDSKTDFAELLENQYSRDLATGHTVSGPHKADLRLRVGTLPAQDALSRGQLKLLVCALRIAQGKLLKQQIDKHSIYLVDDLPSELDAQHRQLLLKQLTDTGAQVFVTAIDPAAIVDSLHTPPSRMFHVEQGRVTVIE.

30–37 (GQNGSGKT) is an ATP binding site.

It belongs to the RecF family.

It is found in the cytoplasm. Its function is as follows. The RecF protein is involved in DNA metabolism; it is required for DNA replication and normal SOS inducibility. RecF binds preferentially to single-stranded, linear DNA. It also seems to bind ATP. The chain is DNA replication and repair protein RecF from Shewanella baltica (strain OS185).